The primary structure comprises 389 residues: MEDAGTPCAPPPPAGSQTGAPPANLSSAPHNCSAEGYIYQDSIALPWKVLLAILLALLTLATTLSNAFVIATVYRTRKLHTPANYLIASLAVTDLLVSILVMPISTMYAVTGRWTLGQVVCDLWLSSDITCCTASILHLCVIALDRYWAITDAVEYSAKRTPKRAAVMIALVWVFSISISLPPFFWRQAKAEEEVSDCVVNTDHILYTVYSTVGAFYFPTLLLIALYGRIYVEARSRILKQTPNRTGKRLTRAQLITDSPGSTSSVTSVNSRAPDVPSESGSPVYVNQVKVRVSDALLEKKKLMAARERKATKTLGIILGAFIVCWLPFFIISLVMPICKDACWFHLAIFDFFTWLGYLNSLINPIIYTMSNEDFKQAFHKLIRFKCAS.

The segment at 1-27 is disordered; that stretch reads MEDAGTPCAPPPPAGSQTGAPPANLSS. Topologically, residues 1-45 are extracellular; the sequence is MEDAGTPCAPPPPAGSQTGAPPANLSSAPHNCSAEGYIYQDSIAL. Residues 15 to 27 are compositionally biased toward polar residues; it reads GSQTGAPPANLSS. 2 N-linked (GlcNAc...) asparagine glycosylation sites follow: Asn24 and Asn31. A helical transmembrane segment spans residues 46 to 71; it reads PWKVLLAILLALLTLATTLSNAFVIA. Topologically, residues 72 to 85 are cytoplasmic; the sequence is TVYRTRKLHTPANY. The helical transmembrane segment at 86–110 threads the bilayer; the sequence is LIASLAVTDLLVSILVMPISTMYAV. Residues 111 to 118 are Extracellular-facing; sequence TGRWTLGQ. Residues 119–144 traverse the membrane as a helical segment; it reads VVCDLWLSSDITCCTASILHLCVIAL. An intrachain disulfide couples Cys121 to Cys198. Residues Asp128 and Thr133 each contribute to the ergotamine site. The DRY motif; important for ligand-induced conformation changes and signaling motif lies at 145-147; it reads DRY. Topologically, residues 145 to 164 are cytoplasmic; it reads DRYWAITDAVEYSAKRTPKR. Residues 165–183 traverse the membrane as a helical segment; it reads AAVMIALVWVFSISISLPP. The Extracellular segment spans residues 184 to 204; that stretch reads FFWRQAKAEEEVSDCVVNTDH. Val200 lines the ergotamine pocket. The helical transmembrane segment at 205–228 threads the bilayer; the sequence is ILYTVYSTVGAFYFPTLLLIALYG. Residues 229-314 are Cytoplasmic-facing; that stretch reads RIYVEARSRI…AARERKATKT (86 aa). Residues 258–271 show a composition bias toward polar residues; the sequence is DSPGSTSSVTSVNS. Residues 258–281 form a disordered region; the sequence is DSPGSTSSVTSVNSRAPDVPSESG. The helical transmembrane segment at 315–336 threads the bilayer; it reads LGIILGAFIVCWLPFFIISLVM. The Extracellular portion of the chain corresponds to 337–346; the sequence is PICKDACWFH. Residues 347-369 form a helical membrane-spanning segment; it reads LAIFDFFTWLGYLNSLINPIIYT. The NPxxY motif; important for ligand-induced conformation changes and signaling motif lies at 364–368; sequence NPIIY. Residues 370 to 389 lie on the Cytoplasmic side of the membrane; that stretch reads MSNEDFKQAFHKLIRFKCAS. Residue Cys387 is the site of S-palmitoyl cysteine attachment.

Belongs to the G-protein coupled receptor 1 family. As to quaternary structure, homodimer. Heterodimer with HTR1D. Post-translationally, phosphorylated. Desensitization of the receptor may be mediated by its phosphorylation. In terms of processing, palmitoylated.

The protein resides in the cell membrane. Functionally, G-protein coupled receptor for 5-hydroxytryptamine (serotonin). Also functions as a receptor for ergot alkaloid derivatives, various anxiolytic and antidepressant drugs and other psychoactive substances, such as lysergic acid diethylamide (LSD). Ligand binding causes a conformation change that triggers signaling via guanine nucleotide-binding proteins (G proteins) and modulates the activity of downstream effectors, such as adenylate cyclase. HTR1B is coupled to G(i)/G(o) G alpha proteins and mediates inhibitory neurotransmission by inhibiting adenylate cyclase activity. Arrestin family members inhibit signaling via G proteins and mediate activation of alternative signaling pathways. Regulates the release of 5-hydroxytryptamine, dopamine and acetylcholine in the brain, and thereby affects neural activity, nociceptive processing, pain perception, mood and behavior. Besides, plays a role in vasoconstriction of cerebral arteries. The polypeptide is 5-hydroxytryptamine receptor 1B (HTR1B) (Vulpes vulpes (Red fox)).